A 460-amino-acid polypeptide reads, in one-letter code: Cysteine--tRNA ligase (460 aa).

Cysteine 27 contacts Zn(2+). The short motif at 29–39 (PTVYDLIHVGN) is the 'HIGH' region element. The Zn(2+) site is built by cysteine 207, histidine 232, and glutamate 236. Residues 264 to 268 (KMSKS) carry the 'KMSKS' region motif. ATP is bound at residue lysine 267.

The protein belongs to the class-I aminoacyl-tRNA synthetase family. As to quaternary structure, monomer. The cofactor is Zn(2+).

The protein resides in the cytoplasm. The enzyme catalyses tRNA(Cys) + L-cysteine + ATP = L-cysteinyl-tRNA(Cys) + AMP + diphosphate. In Thermotoga petrophila (strain ATCC BAA-488 / DSM 13995 / JCM 10881 / RKU-1), this protein is Cysteine--tRNA ligase.